Reading from the N-terminus, the 944-residue chain is uncharacterized protein (944 aa).

This is an uncharacterized protein from Ureaplasma parvum serovar 3 (strain ATCC 700970).